Consider the following 345-residue polypeptide: Protein-glutamate methylesterase/protein-glutamine glutaminase 1 (345 aa).

One can recognise a Response regulatory domain in the interval Ser-8–Glu-123. 4-aspartylphosphate is present on Asp-59. The 194-residue stretch at Ala-151–Arg-344 folds into the CheB-type methylesterase domain. Catalysis depends on residues Ser-163, His-190, and Asp-286.

This sequence belongs to the CheB family. Phosphorylated by CheA. Phosphorylation of the N-terminal regulatory domain activates the methylesterase activity.

It localises to the cytoplasm. It carries out the reaction [protein]-L-glutamate 5-O-methyl ester + H2O = L-glutamyl-[protein] + methanol + H(+). It catalyses the reaction L-glutaminyl-[protein] + H2O = L-glutamyl-[protein] + NH4(+). Its function is as follows. Involved in chemotaxis. Part of a chemotaxis signal transduction system that modulates chemotaxis in response to various stimuli. Catalyzes the demethylation of specific methylglutamate residues introduced into the chemoreceptors (methyl-accepting chemotaxis proteins or MCP) by CheR. Also mediates the irreversible deamidation of specific glutamine residues to glutamic acid. This Myxococcus xanthus (strain DK1622) protein is Protein-glutamate methylesterase/protein-glutamine glutaminase 1.